A 215-amino-acid polypeptide reads, in one-letter code: Cytochrome b6 (215 aa).

A helical transmembrane segment spans residues 32-52; it reads IFYCLGGITFTCFLVQVATGF. Cys35 contributes to the heme c binding site. Heme b-binding residues include His86 and His100. Helical transmembrane passes span 90–110, 116–136, and 186–206; these read ASMM…TGGF, STWI…VTGY, and LHTF…FLMI. Heme b is bound by residues His187 and His202.

Belongs to the cytochrome b family. PetB subfamily. The 4 large subunits of the cytochrome b6-f complex are cytochrome b6, subunit IV (17 kDa polypeptide, PetD), cytochrome f and the Rieske protein, while the 4 small subunits are PetG, PetL, PetM and PetN. The complex functions as a dimer. It depends on heme b as a cofactor. Heme c is required as a cofactor.

It is found in the plastid. The protein resides in the chloroplast thylakoid membrane. Component of the cytochrome b6-f complex, which mediates electron transfer between photosystem II (PSII) and photosystem I (PSI), cyclic electron flow around PSI, and state transitions. The chain is Cytochrome b6 from Tetradesmus obliquus (Green alga).